Reading from the N-terminus, the 193-residue chain is dTTP/UTP pyrophosphatase (193 aa).

Aspartate 68 serves as the catalytic Proton acceptor.

Belongs to the Maf family. YhdE subfamily. Requires a divalent metal cation as cofactor.

It localises to the cytoplasm. The catalysed reaction is dTTP + H2O = dTMP + diphosphate + H(+). It catalyses the reaction UTP + H2O = UMP + diphosphate + H(+). Functionally, nucleoside triphosphate pyrophosphatase that hydrolyzes dTTP and UTP. May have a dual role in cell division arrest and in preventing the incorporation of modified nucleotides into cellular nucleic acids. The chain is dTTP/UTP pyrophosphatase from Ruegeria sp. (strain TM1040) (Silicibacter sp.).